The following is a 449-amino-acid chain: Nucleoprotein (449 aa).

A disordered region spans residues 1-55 (MSFTPGKQSSSRASSGNRSGNGILKWADQSDQSRNVQTRGRRVQSKQTATSQQPS). Low complexity predominate over residues 9–22 (SSSRASSGNRSGNG). Composition is skewed to polar residues over residues 29–38 (QSDQSRNVQT) and 45–55 (SKQTATSQQPS). Residues 52–194 (QQPSGGTVVP…GYYIEGSGRS (143 aa)) form an RNA-binding region. The CoV N NTD domain occupies 61-190 (PYYSWFSGIT…VLPQGYYIEG (130 aa)). Positions 106, 122, and 164 each coordinate RNA. Disordered regions lie at residues 158 to 231 (PADI…VTPD), 266 to 297 (ILNK…NFGG), and 387 to 449 (MMNI…TSEI). S167 is subject to Phosphoserine; by host. Phosphothreonine; by host is present on T174. A Phosphoserine; by host modification is found at S191. 2 stretches are compositionally biased toward polar residues: residues 194–204 (SAPNSRSTSRA) and 212–227 (GSRS…STPG). Residues 259-384 (AKEVRQKILN…QNLNAYQHQE (126 aa)) enclose the CoV N CTD domain. The span at 266–276 (ILNKPRQKRSP) shows a compositional bias: basic residues. The interval 266 to 385 (ILNKPRQKRS…NLNAYQHQED (120 aa)) is dimerization. S391 bears the Phosphoserine; by host mark. A compositionally biased stretch (polar residues) spans 400-410 (QKNGQVENDNV). A compositionally biased stretch (basic and acidic residues) spans 423–440 (KSRELTAEDISLLKKMDE). At S424 the chain carries Phosphoserine; by host. T428 bears the Phosphothreonine; by host mark.

It belongs to the betacoronavirus nucleocapsid protein family. Homooligomer. Both monomeric and oligomeric forms interact with RNA. Interacts with protein M. Interacts with NSP3; this interaction serves to tether the genome to the newly translated replicase-transcriptase complex at a very early stage of infection. ADP-ribosylated. The ADP-ribosylation is retained in the virion during infection. Post-translationally, phosphorylated on serine and threonine residues.

It is found in the virion. Its subcellular location is the host endoplasmic reticulum-Golgi intermediate compartment. The protein localises to the host Golgi apparatus. In terms of biological role, packages the positive strand viral genome RNA into a helical ribonucleocapsid (RNP) and plays a fundamental role during virion assembly through its interactions with the viral genome and membrane protein M. Plays an important role in enhancing the efficiency of subgenomic viral RNA transcription as well as viral replication. The polypeptide is Nucleoprotein (Sus scrofa (Pig)).